Consider the following 137-residue polypeptide: Succinate dehydrogenase cytochrome b560 subunit (137 aa).

The next 2 membrane-spanning stretches (helical) occupy residues 31–51 and 60–80; these read AFLATMVLFSILFFKIGDLSL and FFFLTFYLNWFIISLVNFTLL. H85 serves as a coordination point for heme. The chain crosses the membrane as a helical span at residues 106 to 126; the sequence is VYTSGIIMLFCAAFLALLNII.

It belongs to the cytochrome b560 family. As to quaternary structure, forms part of complex II containing four subunits: a 70 kDa flavoprotein (FP), a 27 kDa iron-sulfur protein (IP), a cytochrome B and a membrane-anchoring protein. The cofactor is heme.

It is found in the mitochondrion inner membrane. It functions in the pathway carbohydrate metabolism; tricarboxylic acid cycle. Membrane-anchoring subunit of succinate dehydrogenase (SDH) that is involved in complex II of the mitochondrial electron transport chain and is responsible for transferring electrons from succinate to ubiquinone (coenzyme Q). This is Succinate dehydrogenase cytochrome b560 subunit (SDH3) from Marchantia polymorpha (Common liverwort).